The following is a 297-amino-acid chain: tRNA pseudouridine synthase A (297 aa).

Aspartate 72 serves as the catalytic Nucleophile. Residue tyrosine 144 coordinates substrate.

The protein belongs to the tRNA pseudouridine synthase TruA family. Homodimer.

The catalysed reaction is uridine(38/39/40) in tRNA = pseudouridine(38/39/40) in tRNA. Formation of pseudouridine at positions 38, 39 and 40 in the anticodon stem and loop of transfer RNAs. The chain is tRNA pseudouridine synthase A from Mycobacterium bovis (strain ATCC BAA-935 / AF2122/97).